The primary structure comprises 166 residues: Transcriptional repressor NrdR (166 aa).

Residues Cys3–Cys34 fold into a zinc finger. The ATP-cone domain occupies Leu49–Asp139.

Belongs to the NrdR family. Zn(2+) is required as a cofactor.

Negatively regulates transcription of bacterial ribonucleotide reductase nrd genes and operons by binding to NrdR-boxes. The sequence is that of Transcriptional repressor NrdR from Methylacidiphilum infernorum (isolate V4) (Methylokorus infernorum (strain V4)).